A 137-amino-acid chain; its full sequence is Glutamyl-tRNA(Gln) amidotransferase subunit C, chloroplastic/mitochondrial (137 aa).

The protein belongs to the GatC family. Subunit of the heterotrimeric GatCAB amidotransferase (AdT) complex, composed of A, B and C subunits.

It localises to the mitochondrion. The protein localises to the plastid. The protein resides in the chloroplast. It carries out the reaction L-glutamyl-tRNA(Gln) + L-glutamine + ATP + H2O = L-glutaminyl-tRNA(Gln) + L-glutamate + ADP + phosphate + H(+). In terms of biological role, allows the formation of correctly charged Gln-tRNA(Gln) through the transamidation of misacylated Glu-tRNA(Gln) in chloroplasts and mitochondria. The reaction takes place in the presence of glutamine and ATP through an activated gamma-phospho-Glu-tRNA(Gln). The chain is Glutamyl-tRNA(Gln) amidotransferase subunit C, chloroplastic/mitochondrial from Vitis vinifera (Grape).